A 393-amino-acid polypeptide reads, in one-letter code: Interleukin-1 receptor type 2 (393 aa).

The first 13 residues, 1 to 13, serve as a signal peptide directing secretion; it reads MFRLYVLVMGVSA. At 14–347 the chain is on the extracellular side; it reads FTLQPAAHTG…RTTVKEPPPT (334 aa). 3 cysteine pairs are disulfide-bonded: Cys28-Cys116, Cys50-Cys108, and Cys152-Cys207. Ig-like C2-type domains lie at 29–120, 134–221, and 237–342; these read PVRG…DKVS, PFIS…YNIT, and PVII…TTVK. N-linked (GlcNAc...) asparagine glycans are attached at residues Asn66, Asn72, and Asn112. N-linked (GlcNAc...) asparagine glycosylation is found at Asn219 and Asn277. An intrachain disulfide couples Cys258 to Cys326. A helical membrane pass occupies residues 348–368; it reads FSWGIVLAPLALAFLVLGGIW. At 369-393 the chain is on the cytoplasmic side; it reads MHRRCKHRTGKADGLTVLRPHHQDF.

Belongs to the interleukin-1 receptor family. As to quaternary structure, forms a non-signaling receptor complex consisting of IL1R2 and IL1RAP. In terms of processing, a soluble form (sIL1R2) can also be produced by proteolytic cleavage at the cell surface (shedding) involving a metalloproteinase.

It localises to the secreted. The protein localises to the cell membrane. Functionally, non-signaling receptor for IL1A, IL1B and IL1RN. Reduces IL1B activities. Serves as a decoy receptor by competitive binding to IL1B and preventing its binding to IL1R1. Also modulates cellular response through non-signaling association with IL1RAP after binding to IL1B. IL1R2 (membrane and secreted forms) preferentially binds IL1B and poorly IL1A and IL1RN. The secreted IL1R2 recruits secreted IL1RAP with high affinity; this complex formation may be the dominant mechanism for neutralization of IL1B by secreted/soluble receptors. The chain is Interleukin-1 receptor type 2 (IL1R2) from Chlorocebus aethiops (Green monkey).